A 196-amino-acid chain; its full sequence is MLQNPIHLRLERLESWQHVTFMACLCERMYPNYAMFCKQTEFGDGQIYRRILDLIWETLTVKDAKVNFDSQLEKFEEAIPAADDYDLYGVYPAIDACVALSELMHSRLSGETLEHAIEVSKTSITTVAMLEMTQAGREMTDEELKTNPAVEQEWDIQWEIFRLLADCEERDIELIKGLRADLREAGESNIGINFQQ.

It to H.influenzae HI_0431.

This is an uncharacterized protein from Salmonella typhi.